Here is a 220-residue protein sequence, read N- to C-terminus: NADH-quinone oxidoreductase subunit I (220 aa).

4Fe-4S ferredoxin-type domains lie at 71–102 (LQRL…IITH) and 112–141 (DSYT…MGNR). Cysteine 82, cysteine 85, cysteine 88, cysteine 92, cysteine 121, cysteine 124, cysteine 127, and cysteine 131 together coordinate [4Fe-4S] cluster. A disordered region spans residues 187–220 (MQATPLDYVQEPSKEESKEETPTRSESHKGDENV). The segment covering 198-220 (PSKEESKEETPTRSESHKGDENV) has biased composition (basic and acidic residues).

This sequence belongs to the complex I 23 kDa subunit family. As to quaternary structure, NDH-1 is composed of 14 different subunits. Subunits NuoA, H, J, K, L, M, N constitute the membrane sector of the complex. [4Fe-4S] cluster serves as cofactor.

It localises to the cell inner membrane. The enzyme catalyses a quinone + NADH + 5 H(+)(in) = a quinol + NAD(+) + 4 H(+)(out). NDH-1 shuttles electrons from NADH, via FMN and iron-sulfur (Fe-S) centers, to quinones in the respiratory chain. The immediate electron acceptor for the enzyme in this species is believed to be ubiquinone. Couples the redox reaction to proton translocation (for every two electrons transferred, four hydrogen ions are translocated across the cytoplasmic membrane), and thus conserves the redox energy in a proton gradient. The polypeptide is NADH-quinone oxidoreductase subunit I (Helicobacter pylori (strain G27)).